The chain runs to 840 residues: Probable alpha-glucuronidase A (840 aa).

The signal sequence occupies residues 1–19 (MRSVITTLTLVASVGLAVA). Asparagine 222, asparagine 310, asparagine 465, asparagine 527, asparagine 576, asparagine 682, and asparagine 732 each carry an N-linked (GlcNAc...) asparagine glycan.

The protein belongs to the glycosyl hydrolase 67 family.

It is found in the secreted. The enzyme catalyses an alpha-D-glucuronoside + H2O = D-glucuronate + an alcohol. Its function is as follows. Alpha-glucuronidase involved in the hydrolysis of xylan, a major structural heterogeneous polysaccharide found in plant biomass representing the second most abundant polysaccharide in the biosphere, after cellulose. Releases 4-O-methylglucuronic acid from xylan. This Aspergillus clavatus (strain ATCC 1007 / CBS 513.65 / DSM 816 / NCTC 3887 / NRRL 1 / QM 1276 / 107) protein is Probable alpha-glucuronidase A (aguA).